The following is a 292-amino-acid chain: Elongation factor Ts (292 aa).

The tract at residues 81–84 (TDFV) is involved in Mg(2+) ion dislocation from EF-Tu.

This sequence belongs to the EF-Ts family.

It localises to the cytoplasm. Associates with the EF-Tu.GDP complex and induces the exchange of GDP to GTP. It remains bound to the aminoacyl-tRNA.EF-Tu.GTP complex up to the GTP hydrolysis stage on the ribosome. The chain is Elongation factor Ts from Acidithiobacillus ferrooxidans (strain ATCC 23270 / DSM 14882 / CIP 104768 / NCIMB 8455) (Ferrobacillus ferrooxidans (strain ATCC 23270)).